Reading from the N-terminus, the 568-residue chain is Natural resistance-associated macrophage protein 2 (568 aa).

Residues 1–40 form a disordered region; sequence MVLGPEQKMSDDSVSGDHGESASLGNINPAYSNPSLSQSP. The Cytoplasmic portion of the chain corresponds to 1–69; the sequence is MVLGPEQKMS…EEYSCFSFRK (69 aa). Residues 8–20 show a composition bias toward basic and acidic residues; that stretch reads KMSDDSVSGDHGE. Polar residues predominate over residues 23–40; it reads SLGNINPAYSNPSLSQSP. A helical transmembrane segment spans residues 70–90; the sequence is LWAFTGPGFLMSIAYLDPGNI. At 91–96 the chain is on the extracellular side; sequence ESDLQS. A helical transmembrane segment spans residues 97 to 117; that stretch reads GAVAGFKLLWILLLATLVGLL. At 118–154 the chain is on the cytoplasmic side; sequence LQRLAARLGVVTGLHLAEVCHRQYPKVPRVILWLMVE. The helical transmembrane segment at 155-175 threads the bilayer; it reads LAIIGSDMQEVIGSAIAINLL. The Extracellular portion of the chain corresponds to 176–179; sequence SVGR. A helical transmembrane segment spans residues 180-200; that stretch reads IPLWGGVLITIADTFVFLFLD. At 201 to 208 the chain is on the cytoplasmic side; the sequence is KYGLRKLE. Residues 209–229 traverse the membrane as a helical segment; sequence AFFGFLITIMALTFGYEYVTV. The Extracellular portion of the chain corresponds to 230 to 255; it reads KPSQSQVLKGMFVPSCSGCRTPQIEQ. The helical transmembrane segment at 256–276 threads the bilayer; the sequence is AVGIVGAVIMPHNMYLHSALV. Over 277–301 the chain is Cytoplasmic; it reads KSRQVNRNNKQEVREANKYFFIESC. The chain crosses the membrane as a helical span at residues 302–322; that stretch reads IALFVSFIINVFVVSVFAEAF. At 323-360 the chain is on the extracellular side; that stretch reads FGKTNEQVVEVCTNTSSPHAGLFPKDNSTLAVDIYKGG. N-linked (GlcNAc...) asparagine glycans are attached at residues N336 and N349. Residues 361–381 form a helical membrane-spanning segment; it reads VVLGCYFGPAALYIWAVGILA. The Cytoplasmic portion of the chain corresponds to 382–408; it reads AGQSSTMTGTYSGQFVMEGFLNLKWSR. The chain crosses the membrane as a helical span at residues 409 to 429; sequence FARVVLTRSIAIIPTLLVAVF. The Extracellular portion of the chain corresponds to 430 to 440; the sequence is QDVEHLTGMND. A helical transmembrane segment spans residues 441-461; sequence FLNVLQSLQLPFALIPILTFT. The Cytoplasmic portion of the chain corresponds to 462–482; the sequence is SLRPVMSDFANGLGWRIAGGI. Residues 483–503 traverse the membrane as a helical segment; that stretch reads LVLIICSINMYFVVVYVRDLG. Over 504–506 the chain is Extracellular; sequence HVA. A helical membrane pass occupies residues 507-527; that stretch reads LYVVAAVVSVAYLGFVFYLGW. Residues 528 to 568 lie on the Cytoplasmic side of the membrane; it reads QCLIALGMSFLDCGHTCHLGLTAQPELYLLNTMDADSLVSR. The required for early endosome targeting stretch occupies residues 555-559; sequence YLLNT. A phosphoserine mark is found at S564 and S567.

Belongs to the NRAMP family. Forms a complex with NDFIP1 and NEDD4L, in cortical neurons, in response to iron and cobalt exposure; this interaction leads to SLC11A2 ubiquitination by NEDD4L and proteasome-dependent degradation. Interacts with NDFIP1, NDFIP2 and WWP2; this interaction leads to SLC11A2 ubiquitination by WWP2 and subsequent proteasome-dependent degradation. Interacts with COX2 and TOM6 at the outer mitochondrion membrane. Interacts with ARRDC1; this interaction regulates the incorporation of SLC11A2 into extracellular vesicles through an ubiquitination-dependent mechanism. Interacts with ARRDC4; controls the incorporation of SLC11A2 into extracellular vesicles through an ubiquitination-dependent mechanism. Post-translationally, ubiquitinated by WWP2. In terms of processing, N-glycosylated. As to expression, ubiquitously expressed. Expressed in erythroid progenitors.

It localises to the early endosome membrane. Its subcellular location is the apical cell membrane. The protein localises to the late endosome membrane. It is found in the lysosome membrane. The protein resides in the cell membrane. It localises to the extracellular vesicle membrane. Its subcellular location is the mitochondrion outer membrane. The protein localises to the golgi apparatus. It is found in the trans-Golgi network membrane. The protein resides in the recycling endosome membrane. The enzyme catalyses Fe(2+)(in) + H(+)(in) = Fe(2+)(out) + H(+)(out). The catalysed reaction is Co(2+)(out) + H(+)(out) = Co(2+)(in) + H(+)(in). It catalyses the reaction Cd(2+)(out) + H(+)(out) = Cd(2+)(in) + H(+)(in). It carries out the reaction Mn(2+)(in) + H(+)(in) = Mn(2+)(out) + H(+)(out). The enzyme catalyses Zn(2+)(out) + H(+)(out) = Zn(2+)(in) + H(+)(in). The catalysed reaction is Ni(2+)(out) + H(+)(out) = Ni(2+)(in) + H(+)(in). It catalyses the reaction H(+)(in) = H(+)(out). It carries out the reaction Fe(2+)(in) = Fe(2+)(out). Functionally, proton-coupled metal ion symporter operating with a proton to metal ion stoichiometry of 1:1. Selectively transports various divalent metal cations, in decreasing affinity: Cd(2+) &gt; Fe(2+) &gt; Co(2+), Mn(2+) &gt;&gt; Zn(2+), Ni(2+), VO(2+). Essential for maintenance of iron homeostasis by modulating intestinal absorption of dietary Fe(2+) and TF-associated endosomal Fe(2+) transport in erythroid precursors and other cells. Enables Fe(2+) and Mn(2+) ion entry into mitochondria, and is thus expected to promote mitochondrial heme synthesis, iron-sulfur cluster biogenesis and antioxidant defense. Can mediate uncoupled fluxes of either protons or metal ions. This chain is Natural resistance-associated macrophage protein 2 (SLC11A2), found in Homo sapiens (Human).